The chain runs to 949 residues: Protein translocase subunit SecA 1 (949 aa).

ATP-binding positions include glutamine 86, 104–108 (GEGKT), and aspartate 493. The segment at 869-949 (VDGGARERAP…AKPPKSVKKR (81 aa)) is disordered. Positions 925 to 934 (SRRERREAAR) are enriched in basic and acidic residues.

It belongs to the SecA family. Monomer and homodimer. Part of the essential Sec protein translocation apparatus which comprises SecA, SecYEG and auxiliary proteins SecDF. Other proteins may also be involved.

The protein resides in the cell membrane. Its subcellular location is the cytoplasm. It carries out the reaction ATP + H2O + cellular proteinSide 1 = ADP + phosphate + cellular proteinSide 2.. In terms of biological role, part of the Sec protein translocase complex. Interacts with the SecYEG preprotein conducting channel. Has a central role in coupling the hydrolysis of ATP to the transfer of proteins into and across the cell membrane, serving as an ATP-driven molecular motor driving the stepwise translocation of polypeptide chains across the membrane. The sequence is that of Protein translocase subunit SecA 1 from Mycobacterium bovis (strain ATCC BAA-935 / AF2122/97).